A 399-amino-acid polypeptide reads, in one-letter code: Elongation factor Tu 2 (399 aa).

The 200-residue stretch at 10–209 (KPHVNIGTIG…QVDGYIPEPE (200 aa)) folds into the tr-type G domain. The interval 19 to 26 (GHVDHGKT) is G1. Residue 19 to 26 (GHVDHGKT) participates in GTP binding. Thr-26 is a Mg(2+) binding site. Residues 60-64 (GITIA) are G2. Residues 81-84 (DCPG) are G3. Residues 81–85 (DCPGH) and 136–139 (NKAD) contribute to the GTP site. Residues 136 to 139 (NKAD) form a G4 region. The segment at 174–176 (SAL) is G5.

This sequence belongs to the TRAFAC class translation factor GTPase superfamily. Classic translation factor GTPase family. EF-Tu/EF-1A subfamily. Monomer.

The protein localises to the cytoplasm. It catalyses the reaction GTP + H2O = GDP + phosphate + H(+). In terms of biological role, GTP hydrolase that promotes the GTP-dependent binding of aminoacyl-tRNA to the A-site of ribosomes during protein biosynthesis. The polypeptide is Elongation factor Tu 2 (Syntrophotalea carbinolica (strain DSM 2380 / NBRC 103641 / GraBd1) (Pelobacter carbinolicus)).